The primary structure comprises 269 residues: Protein MrkE (269 aa).

The Response regulatory domain maps to 59 to 173 (KVIIVEDEFL…RIINMLQKLT (115 aa)). At Asp-110 the chain carries 4-aspartylphosphate. Positions 197-269 (INLIKDERII…VAQVSIANRF (73 aa)) constitute an HTH LytTR-type domain.

Its function is as follows. May be involved in the regulation of fimbrial expression. The polypeptide is Protein MrkE (mrkE) (Klebsiella pneumoniae).